The following is a 225-amino-acid chain: Small ribosomal subunit protein uS3 (225 aa).

Residues Ile-38–Lys-106 enclose the KH type-2 domain.

This sequence belongs to the universal ribosomal protein uS3 family. As to quaternary structure, part of the 30S ribosomal subunit. Forms a tight complex with proteins S10 and S14.

In terms of biological role, binds the lower part of the 30S subunit head. Binds mRNA in the 70S ribosome, positioning it for translation. This chain is Small ribosomal subunit protein uS3, found in Leptospira borgpetersenii serovar Hardjo-bovis (strain JB197).